The chain runs to 346 residues: D-alanine--D-alanine ligase (346 aa).

Residues 125-325 (KRIWRSEGLP…YPALCLEVLR (201 aa)) enclose the ATP-grasp domain. 151–206 (FAALGSPMIVKPDREGSTIGLTKVTQIEQCGAAYALAARHDAMVLCEQFVKGDEVT) contributes to the ATP binding site. Residues aspartate 278, glutamate 292, and asparagine 294 each contribute to the Mg(2+) site.

The protein belongs to the D-alanine--D-alanine ligase family. Mg(2+) serves as cofactor. The cofactor is Mn(2+).

The protein resides in the cytoplasm. The enzyme catalyses 2 D-alanine + ATP = D-alanyl-D-alanine + ADP + phosphate + H(+). Its pathway is cell wall biogenesis; peptidoglycan biosynthesis. Functionally, cell wall formation. The polypeptide is D-alanine--D-alanine ligase (Albidiferax ferrireducens (strain ATCC BAA-621 / DSM 15236 / T118) (Rhodoferax ferrireducens)).